Consider the following 439-residue polypeptide: Chromosomal replication initiator protein DnaA (439 aa).

A domain I, interacts with DnaA modulators region spans residues 1 to 75 (MESWSRCLER…GIREVVLAIG (75 aa)). The domain II stretch occupies residues 75-101 (GSRPKTTELTVPVDTTGRLSQTVPFNG). Positions 102-319 (NLDTHYNFDN…GALNTLVARA (218 aa)) are domain III, AAA+ region. ATP contacts are provided by Gly-147, Gly-149, Lys-150, and Thr-151. Residues 320-439 (NFTGRAVTIE…WDKLMRKFSE (120 aa)) are domain IV, binds dsDNA.

The protein belongs to the DnaA family. Oligomerizes as a right-handed, spiral filament on DNA at oriC.

It is found in the cytoplasm. Plays an essential role in the initiation and regulation of chromosomal replication. ATP-DnaA binds to the origin of replication (oriC) to initiate formation of the DNA replication initiation complex once per cell cycle. Binds the DnaA box (a 9 base pair repeat at the origin) and separates the double-stranded (ds)DNA. Forms a right-handed helical filament on oriC DNA; dsDNA binds to the exterior of the filament while single-stranded (ss)DNA is stabiized in the filament's interior. The ATP-DnaA-oriC complex binds and stabilizes one strand of the AT-rich DNA unwinding element (DUE), permitting loading of DNA polymerase. After initiation quickly degrades to an ADP-DnaA complex that is not apt for DNA replication. Binds acidic phospholipids. The chain is Chromosomal replication initiator protein DnaA from Xylella fastidiosa (strain Temecula1 / ATCC 700964).